A 215-amino-acid chain; its full sequence is Protein N-lysine methyltransferase METTL21A (215 aa).

Residues W47, 73–75, D94, W125, and A141 each bind S-adenosyl-L-methionine; that span reads GAG.

It belongs to the methyltransferase superfamily. METTL21 family.

Its subcellular location is the cytoplasm. The catalysed reaction is L-lysyl-[protein] + 3 S-adenosyl-L-methionine = N(6),N(6),N(6)-trimethyl-L-lysyl-[protein] + 3 S-adenosyl-L-homocysteine + 3 H(+). Functionally, protein-lysine methyltransferase that selectively trimethylates residues in heat shock protein 70 (HSP70) family members. The sequence is that of Protein N-lysine methyltransferase METTL21A (mettl21a) from Xenopus tropicalis (Western clawed frog).